Consider the following 182-residue polypeptide: ATP synthase subunit delta (182 aa).

The protein belongs to the ATPase delta chain family. In terms of assembly, F-type ATPases have 2 components, F(1) - the catalytic core - and F(0) - the membrane proton channel. F(1) has five subunits: alpha(3), beta(3), gamma(1), delta(1), epsilon(1). F(0) has three main subunits: a(1), b(2) and c(10-14). The alpha and beta chains form an alternating ring which encloses part of the gamma chain. F(1) is attached to F(0) by a central stalk formed by the gamma and epsilon chains, while a peripheral stalk is formed by the delta and b chains.

The protein resides in the cell inner membrane. F(1)F(0) ATP synthase produces ATP from ADP in the presence of a proton or sodium gradient. F-type ATPases consist of two structural domains, F(1) containing the extramembraneous catalytic core and F(0) containing the membrane proton channel, linked together by a central stalk and a peripheral stalk. During catalysis, ATP synthesis in the catalytic domain of F(1) is coupled via a rotary mechanism of the central stalk subunits to proton translocation. In terms of biological role, this protein is part of the stalk that links CF(0) to CF(1). It either transmits conformational changes from CF(0) to CF(1) or is implicated in proton conduction. In Myxococcus xanthus (strain DK1622), this protein is ATP synthase subunit delta.